A 130-amino-acid polypeptide reads, in one-letter code: Small ribosomal subunit protein uS9 (130 aa).

It belongs to the universal ribosomal protein uS9 family.

The sequence is that of Small ribosomal subunit protein uS9 from Xanthomonas campestris pv. campestris (strain 8004).